A 485-amino-acid polypeptide reads, in one-letter code: Tektin-5 (485 aa).

Coiled-coil stretches lie at residues 113-185 (SRLT…EVNC), 225-251 (QQQMRKLAQRIDLQMRDNRDAQHALER), 342-385 (FNAR…MAKE), and 423-443 (DDTLQTLKLRLRETQDMLQLL).

It belongs to the tektin family. As to quaternary structure, microtubule inner protein component of sperm flagellar doublet microtubules. Interacts with TEKT3. In terms of processing, ubiquitinated, leading to its degradation. Deubiquitinated by USP16, promoting its stability.

The protein resides in the cytoplasm. Its subcellular location is the cytoskeleton. The protein localises to the flagellum axoneme. Functionally, sperm-specific microtubule inner protein (MIP) part of the dynein-decorated doublet microtubules (DMTs) in flagellar axoneme. Forms an extensive interaction network in different conformations that reinforces the helix bundle composed by other tektin proteins (TEKT1 to TEKT4) and MIPs to anchor the tektin bundle onto the tubulin wall of A-tubule of the sperm flagellum. This Macaca fascicularis (Crab-eating macaque) protein is Tektin-5 (TEKT5).